The primary structure comprises 369 residues: Succinyl-diaminopimelate desuccinylase (369 aa).

His-77 provides a ligand contact to Zn(2+). Residue Asp-79 is part of the active site. Asp-103 is a binding site for Zn(2+). Glu-136 (proton acceptor) is an active-site residue. Zn(2+) is bound by residues Glu-137, Glu-165, and His-345.

The protein belongs to the peptidase M20A family. It depends on Zn(2+) as a cofactor. Co(2+) is required as a cofactor.

The catalysed reaction is N-succinyl-(2S,6S)-2,6-diaminopimelate + H2O = (2S,6S)-2,6-diaminopimelate + succinate. It functions in the pathway amino-acid biosynthesis; L-lysine biosynthesis via DAP pathway; LL-2,6-diaminopimelate from (S)-tetrahydrodipicolinate (succinylase route): step 3/3. The sequence is that of Succinyl-diaminopimelate desuccinylase (dapE) from Corynebacterium glutamicum (strain ATCC 13032 / DSM 20300 / JCM 1318 / BCRC 11384 / CCUG 27702 / LMG 3730 / NBRC 12168 / NCIMB 10025 / NRRL B-2784 / 534).